A 207-amino-acid chain; its full sequence is U1 small nuclear ribonucleoprotein C (207 aa).

Residues 4–36 (YYCDYCDTYLTHDSPSVRKQHNAGYKHKANVRI) form a Matrin-type zinc finger. Pro residues-rich tracts occupy residues 105 to 115 (PPQGYMPPPGV) and 122 to 131 (PGAPLPPPPQ). The interval 105-207 (PPQGYMPPPG…PSAESPESNE (103 aa)) is disordered. Residues 132 to 144 (NGILRPPGMAPIP) show a composition bias toward low complexity. A compositionally biased stretch (pro residues) spans 162-183 (GPPPNYNGLPPPPPYHTNPAAP). Residues 184–207 (PSGNFNNPNLNNPNPSAESPESNE) show a composition bias toward low complexity.

Belongs to the U1 small nuclear ribonucleoprotein C family. As to quaternary structure, U1 snRNP is composed of the 7 core Sm proteins B/B', D1, D2, D3, E, F and G that assemble in a heptameric protein ring on the Sm site of the small nuclear RNA to form the core snRNP, and at least 3 U1 snRNP-specific proteins U1-70K, U1-A and U1-C. U1-C interacts with U1 snRNA and the 5' splice-site region of the pre-mRNA.

The protein localises to the nucleus. Component of the spliceosomal U1 snRNP, which is essential for recognition of the pre-mRNA 5' splice-site and the subsequent assembly of the spliceosome. U1-C is directly involved in initial 5' splice-site recognition for both constitutive and regulated alternative splicing. The interaction with the 5' splice-site seems to precede base-pairing between the pre-mRNA and the U1 snRNA. Stimulates commitment or early (E) complex formation by stabilizing the base pairing of the 5' end of the U1 snRNA and the 5' splice-site region. The polypeptide is U1 small nuclear ribonucleoprotein C (Arabidopsis thaliana (Mouse-ear cress)).